Here is a 242-residue protein sequence, read N- to C-terminus: uncharacterized protein (242 aa).

Over residues 1-12 the composition is skewed to basic and acidic residues; that stretch reads MKLRRERFERRN. The disordered stretch occupies residues 1–21; that stretch reads MKLRRERFERRNGSGKNSQSS. Residues 1 to 23 are Cytoplasmic-facing; that stretch reads MKLRRERFERRNGSGKNSQSSSS. A helical membrane pass occupies residues 24–44; that stretch reads WMVTFTDLITLILVFFILLFS. Residues 45–242 are Extracellular-facing; it reads MSQIDLQKFK…VIKKSKTTSS (198 aa). Residues 64–91 are disordered; sequence GNGLQPDQTSIEKKNTSPSDTKKQEDQQ. Basic and acidic residues predominate over residues 73 to 89; it reads SIEKKNTSPSDTKKQED. The OmpA-like domain maps to 117-238; it reads ERGVVLVLQE…RVEIVIKKSK (122 aa).

This sequence belongs to the MotB family.

The protein localises to the cell membrane. In terms of biological role, may be involved in some transport function. This is an uncharacterized protein from Bacillus subtilis (strain 168).